Here is a 150-residue protein sequence, read N- to C-terminus: Arginine repressor (150 aa).

It belongs to the ArgR family.

The protein resides in the cytoplasm. Its pathway is amino-acid biosynthesis; L-arginine biosynthesis [regulation]. Regulates arginine biosynthesis genes. In Clostridium botulinum (strain ATCC 19397 / Type A), this protein is Arginine repressor.